Consider the following 621-residue polypeptide: 1-deoxy-D-xylulose-5-phosphate synthase (621 aa).

Thiamine diphosphate-binding positions include His80 and 121 to 123; that span reads GHS. Asp152 lines the Mg(2+) pocket. Thiamine diphosphate is bound by residues 153 to 154, Asn181, Tyr288, and Glu370; that span reads GA. Asn181 is a Mg(2+) binding site.

It belongs to the transketolase family. DXPS subfamily. Homodimer. It depends on Mg(2+) as a cofactor. Thiamine diphosphate is required as a cofactor.

It catalyses the reaction D-glyceraldehyde 3-phosphate + pyruvate + H(+) = 1-deoxy-D-xylulose 5-phosphate + CO2. It participates in metabolic intermediate biosynthesis; 1-deoxy-D-xylulose 5-phosphate biosynthesis; 1-deoxy-D-xylulose 5-phosphate from D-glyceraldehyde 3-phosphate and pyruvate: step 1/1. Its function is as follows. Catalyzes the acyloin condensation reaction between C atoms 2 and 3 of pyruvate and glyceraldehyde 3-phosphate to yield 1-deoxy-D-xylulose-5-phosphate (DXP). This chain is 1-deoxy-D-xylulose-5-phosphate synthase, found in Pseudoalteromonas atlantica (strain T6c / ATCC BAA-1087).